The primary structure comprises 88 residues: LYR motif-containing protein 2 (88 aa).

A mitochondrion-targeting transit peptide spans 1–19 (MAVSRLPPAALSLKQFLQR).

This sequence belongs to the complex I LYR family.

The protein resides in the mitochondrion. Involved in efficient integration of the N-module into mitochondrial respiratory chain complex I. This chain is LYR motif-containing protein 2 (lyrm2), found in Danio rerio (Zebrafish).